Here is a 156-residue protein sequence, read N- to C-terminus: Small ribosomal subunit protein uS7 (156 aa).

Belongs to the universal ribosomal protein uS7 family. Part of the 30S ribosomal subunit. Contacts proteins S9 and S11.

Its function is as follows. One of the primary rRNA binding proteins, it binds directly to 16S rRNA where it nucleates assembly of the head domain of the 30S subunit. Is located at the subunit interface close to the decoding center, probably blocks exit of the E-site tRNA. In Methylobacterium radiotolerans (strain ATCC 27329 / DSM 1819 / JCM 2831 / NBRC 15690 / NCIMB 10815 / 0-1), this protein is Small ribosomal subunit protein uS7.